A 220-amino-acid chain; its full sequence is UPF0643 protein PB2B2.08 (220 aa).

This sequence belongs to the UPF0643 family.

It localises to the cytoplasm. Its subcellular location is the nucleus. The polypeptide is UPF0643 protein PB2B2.08 (Schizosaccharomyces pombe (strain 972 / ATCC 24843) (Fission yeast)).